Reading from the N-terminus, the 224-residue chain is ATP-dependent dethiobiotin synthetase BioD (224 aa).

Residue threonine 18 participates in Mg(2+) binding. Residue lysine 39 is part of the active site. A substrate-binding site is contributed by serine 43. Residues aspartate 56 and glutamate 117 each coordinate Mg(2+). Residues aspartate 56, 117–120 (EGVG), and 177–178 (NE) each bind ATP.

This sequence belongs to the dethiobiotin synthetase family. Homodimer. It depends on Mg(2+) as a cofactor.

The protein localises to the cytoplasm. It catalyses the reaction (7R,8S)-7,8-diammoniononanoate + CO2 + ATP = (4R,5S)-dethiobiotin + ADP + phosphate + 3 H(+). It functions in the pathway cofactor biosynthesis; biotin biosynthesis; biotin from 7,8-diaminononanoate: step 1/2. In terms of biological role, catalyzes a mechanistically unusual reaction, the ATP-dependent insertion of CO2 between the N7 and N8 nitrogen atoms of 7,8-diaminopelargonic acid (DAPA, also called 7,8-diammoniononanoate) to form a ureido ring. In Xanthomonas oryzae pv. oryzae (strain MAFF 311018), this protein is ATP-dependent dethiobiotin synthetase BioD.